An 88-amino-acid chain; its full sequence is Large ribosomal subunit protein bL27 (88 aa).

Residues 1 to 22 (MAQKKAGGSSRNGRDSAGRRLG) form a disordered region.

This sequence belongs to the bacterial ribosomal protein bL27 family.

The sequence is that of Large ribosomal subunit protein bL27 from Gluconobacter oxydans (strain 621H) (Gluconobacter suboxydans).